Consider the following 335-residue polypeptide: Pyridoxal 5'-phosphate synthase subunit PdxS (335 aa).

A D-ribose 5-phosphate-binding site is contributed by Asp-30. Lys-87 serves as the catalytic Schiff-base intermediate with D-ribose 5-phosphate. Gly-159 serves as a coordination point for D-ribose 5-phosphate. Residue Arg-171 participates in D-glyceraldehyde 3-phosphate binding. D-ribose 5-phosphate-binding positions include Gly-257 and Gly-278–Ser-279.

This sequence belongs to the PdxS/SNZ family. In terms of assembly, in the presence of PdxT, forms a dodecamer of heterodimers.

The enzyme catalyses aldehydo-D-ribose 5-phosphate + D-glyceraldehyde 3-phosphate + L-glutamine = pyridoxal 5'-phosphate + L-glutamate + phosphate + 3 H2O + H(+). It participates in cofactor biosynthesis; pyridoxal 5'-phosphate biosynthesis. Catalyzes the formation of pyridoxal 5'-phosphate from ribose 5-phosphate (RBP), glyceraldehyde 3-phosphate (G3P) and ammonia. The ammonia is provided by the PdxT subunit. Can also use ribulose 5-phosphate and dihydroxyacetone phosphate as substrates, resulting from enzyme-catalyzed isomerization of RBP and G3P, respectively. The chain is Pyridoxal 5'-phosphate synthase subunit PdxS from Thermococcus gammatolerans (strain DSM 15229 / JCM 11827 / EJ3).